The sequence spans 129 residues: Glycine cleavage system H protein (129 aa).

The 83-residue stretch at 24 to 106 (TYTVGITEHA…YTGGWIFKIK (83 aa)) folds into the Lipoyl-binding domain. An N6-lipoyllysine modification is found at Lys65.

The protein belongs to the GcvH family. The glycine cleavage system is composed of four proteins: P, T, L and H. (R)-lipoate is required as a cofactor.

The glycine cleavage system catalyzes the degradation of glycine. The H protein shuttles the methylamine group of glycine from the P protein to the T protein. The sequence is that of Glycine cleavage system H protein from Salmonella choleraesuis (strain SC-B67).